We begin with the raw amino-acid sequence, 154 residues long: Snaclec agglucetin subunit alpha-1 (154 aa).

A signal peptide spans 1–23 (MGRFIFVSFGLLVVFLSLSGTGA). 3 disulfides stabilise this stretch: C27–C38, C55–C150, and C125–C142. In terms of domain architecture, C-type lectin spans 34-151 (YDQSCYRVFK…CGSEYAFVCK (118 aa)). An N-linked (GlcNAc...) asparagine glycan is attached at N116.

The protein belongs to the snaclec family. In terms of assembly, heterotetramer of the subunits alpha-1, alpha-2, beta-1 and beta-2; disulfide-linked. As to expression, expressed by the venom gland.

The protein resides in the secreted. Functionally, agglucetin specifically causes platelet aggregation and surface exposure of integrin alpha-IIb/beta-3 with a GPIb-(GP1BA-) dependent manner in washed platelets. It binds to human platelets in a saturable manner, and its binding is specifically blocked by anti-GP Ib mAb. It regulates endothelial cell survival and promotes angiogenesis by activating integrin alpha-v/beta-3 signaling through FAK/phosphatidylinositol 3-kinase (PI3K)/Akt pathway. This is Snaclec agglucetin subunit alpha-1 from Deinagkistrodon acutus (Hundred-pace snake).